A 102-amino-acid polypeptide reads, in one-letter code: Small ribosomal subunit protein uS10 (102 aa).

It belongs to the universal ribosomal protein uS10 family. Part of the 30S ribosomal subunit.

Functionally, involved in the binding of tRNA to the ribosomes. The chain is Small ribosomal subunit protein uS10 from Methanococcus maripaludis (strain C7 / ATCC BAA-1331).